Here is a 430-residue protein sequence, read N- to C-terminus: Adenylosuccinate synthetase (430 aa).

GTP-binding positions include 12–18 (GDEGKGK) and 40–42 (GHT). The active-site Proton acceptor is aspartate 13. Positions 13 and 40 each coordinate Mg(2+). Residues 13–16 (DEGK), 38–41 (NAGH), threonine 128, arginine 142, glutamine 223, threonine 238, and arginine 302 each bind IMP. The Proton donor role is filled by histidine 41. A substrate-binding site is contributed by 298-304 (TTTGRPR). GTP contacts are provided by residues arginine 304, 330–332 (LLD), and 412–414 (SVG).

Belongs to the adenylosuccinate synthetase family. Homodimer. Mg(2+) serves as cofactor.

Its subcellular location is the cytoplasm. It carries out the reaction IMP + L-aspartate + GTP = N(6)-(1,2-dicarboxyethyl)-AMP + GDP + phosphate + 2 H(+). It participates in purine metabolism; AMP biosynthesis via de novo pathway; AMP from IMP: step 1/2. Its function is as follows. Plays an important role in the de novo pathway of purine nucleotide biosynthesis. Catalyzes the first committed step in the biosynthesis of AMP from IMP. The polypeptide is Adenylosuccinate synthetase (Listeria monocytogenes serovar 1/2a (strain ATCC BAA-679 / EGD-e)).